A 312-amino-acid chain; its full sequence is Olfactory receptor 7D2 (312 aa).

The Extracellular segment spans residues 1-25; sequence MEAGNQTGFLEFILLGLSEDPELQP. Asparagine 5 is a glycosylation site (N-linked (GlcNAc...) asparagine). The chain crosses the membrane as a helical span at residues 26–46; it reads FIFGLFLSMYLVTVLGNLLII. Over 47–54 the chain is Cytoplasmic; sequence LAISSDSH. Residues 55-75 traverse the membrane as a helical segment; it reads LHTPMYFFLSNLSWVDICFST. The Extracellular segment spans residues 76–99; sequence CIVPKMLVNIQTENKAISYMDCLT. The cysteines at positions 97 and 189 are disulfide-linked. The chain crosses the membrane as a helical span at residues 100-120; sequence QVYFSMFFPILDTLLLTVMAY. The Cytoplasmic portion of the chain corresponds to 121–139; that stretch reads DRFVAVCHPLHYMIIMNPH. Residues 140–160 traverse the membrane as a helical segment; it reads LCGLLVFVTWLIGVMTSLLHI. Over 161–197 the chain is Extracellular; it reads SLMMHLIFCKDFEIPHFFCELTYILQLACSDTFLNST. Residues 198–217 traverse the membrane as a helical segment; the sequence is LIYFMTGVLGVFPLLGIIFS. The Cytoplasmic segment spans residues 218–237; it reads YSRIASSIRKMSSSGGKQKA. A helical transmembrane segment spans residues 238 to 258; that stretch reads LSTCGSHLSVVSLFYGTGIGV. Over 259-271 the chain is Extracellular; it reads HFTSAVTHSSQKI. A helical transmembrane segment spans residues 272 to 292; the sequence is SVASVMYTVVTPMLNPFIYSL. Residues 293 to 312 are Cytoplasmic-facing; the sequence is RNKDVKGALGSLLSRAASCL.

This sequence belongs to the G-protein coupled receptor 1 family.

It localises to the cell membrane. In terms of biological role, odorant receptor. The protein is Olfactory receptor 7D2 (OR7D2) of Homo sapiens (Human).